The primary structure comprises 379 residues: MNKPLRIKHPMIKIINNSLNDLPAPTNISMWWNLGSLLGMCLMIQIVTGLFLTMHYTPNIEMAFSSVVHICRDVNNGWLIRTLHANGASMFFICMYLHVGRGIYYGSYMYMNTWMTGTIILFLVMATAFMGYVLPWGQMSFWGATVITNLLSAIPYIGTDIVQWVWGGFAVDNATLNRFYTFHFVLPFIVMAMVMIHLFFLHQTGSNNPIGLNSNIDKIPFHPYFTYKDMITFIILMMILIMLCLIDPYMLGDPDNFVPANPLVTPIHIQPEWYFLFAYAILRSIPNKLGGVIALVMSISILMIMPFYNKTKFRGNQFYPMNQIMFWIMVIVICLLTWIGKRPVEEPYIMTGQILTIIYFSYFLFNVHIAKMWDTLIKT.

4 helical membrane passes run 34 to 54, 78 to 99, 114 to 134, and 179 to 199; these read LGSL…FLTM, WLIR…YLHV, WMTG…GYVL, and FYTF…IHLF. The heme b site is built by H84 and H98. Heme b-binding residues include H183 and H197. Residue H202 participates in a ubiquinone binding. The next 4 helical transmembrane spans lie at 227–247, 289–309, 321–341, and 348–368; these read YKDM…CLID, LGGV…PFYN, MNQI…WIGK, and YIMT…FNVH.

It belongs to the cytochrome b family. As to quaternary structure, the main subunits of complex b-c1 are: cytochrome b, cytochrome c1 and the Rieske protein. Heme b is required as a cofactor.

The protein resides in the mitochondrion inner membrane. Its function is as follows. Component of the ubiquinol-cytochrome c reductase complex (complex III or cytochrome b-c1 complex) that is part of the mitochondrial respiratory chain. The b-c1 complex mediates electron transfer from ubiquinol to cytochrome c. Contributes to the generation of a proton gradient across the mitochondrial membrane that is then used for ATP synthesis. In Locusta migratoria (Migratory locust), this protein is Cytochrome b (MT-CYB).